We begin with the raw amino-acid sequence, 92 residues long: Small ribosomal subunit protein uS19 (92 aa).

This sequence belongs to the universal ribosomal protein uS19 family.

Protein S19 forms a complex with S13 that binds strongly to the 16S ribosomal RNA. This Sodalis glossinidius (strain morsitans) protein is Small ribosomal subunit protein uS19.